Here is a 272-residue protein sequence, read N- to C-terminus: MVTEMSHAESIKRVVDQKLSSHEGFESHMFKIGSYNEAVGESSPFALPYDDSTMALLILSTPDMFDVAFRKWVVQKTMDFGSFDEVCEMVSSPIQSFLEDRLEIMSEKLRKVEENFEILHDYSMTPQRRPKILMQTCGHVAGAAFYYQPCHFQEDGVTWPPAGRMGPNLKFIGLSLHPIYGGHFAFRSVLIFPNVKIPEFCEKEPRPILTASEDVRTALEKFNYNWKDSGFRDFGNPTRRYSTTQMEFFGRPVAERWEVLRPWVDGGAKNID.

Substrate contacts are provided by residues aspartate 121, 132–135 (ILMQ), and 146–148 (YYQ).

It belongs to the MMACHC family. FAD serves as cofactor. FMN is required as a cofactor.

It localises to the cytoplasm. Functionally, catalyzes the reductive dealkylation of cyanocobalamin to cob(II)alamin, using FAD or FMN as cofactor and NADPH as cosubstrate. Can also catalyze the glutathione-dependent reductive demethylation of methylcobalamin, and, with much lower efficiency, the glutathione-dependent reductive demethylation of adenosylcobalamin. Under anaerobic conditions cob(I)alamin is the first product; it is highly reactive and is converted to aquocob(II)alamin in the presence of oxygen. Binds cyanocobalamin, adenosylcobalamin, methylcobalamin and other, related vitamin B12 derivatives. The protein is MMACHC-like protein (cblc-1) of Caenorhabditis elegans.